Here is a 122-residue protein sequence, read N- to C-terminus: Large ribosomal subunit protein uL14 (122 aa).

This sequence belongs to the universal ribosomal protein uL14 family. In terms of assembly, part of the 50S ribosomal subunit. Forms a cluster with proteins L3 and L19. In the 70S ribosome, L14 and L19 interact and together make contacts with the 16S rRNA in bridges B5 and B8.

Its function is as follows. Binds to 23S rRNA. Forms part of two intersubunit bridges in the 70S ribosome. This chain is Large ribosomal subunit protein uL14, found in Caulobacter vibrioides (strain ATCC 19089 / CIP 103742 / CB 15) (Caulobacter crescentus).